The sequence spans 64 residues: uncharacterized protein (64 aa).

Residues 41-61 (VFLALKVLGIMVLFYLLDAII) traverse the membrane as a helical segment.

It localises to the membrane. This is an uncharacterized protein from Acheta domesticus (House cricket).